The sequence spans 587 residues: Kelch-like protein 3 (587 aa).

Residues 1-22 are disordered; sequence MDGESIKPSSQPLIQTGDDEKN. Ser10 bears the Phosphoserine mark. Residues 50–117 form the BTB domain; it reads CDVMIVAEDV…IYTAEIEVTE (68 aa). A BACK domain is found at 152–254; the sequence is CLGIRAFADV…PRDYLVQTVE (103 aa). Residue Thr295 is modified to Phosphothreonine. 6 Kelch repeats span residues 302-347, 348-394, 396-441, 442-490, 491-537, and 539-585; these read VMIV…FMAG, HVYA…VLND, LYAV…VVEG, KLYA…VLSG, QLYA…AVNG, and LYVV…VIHK. Thr375 is modified (phosphothreonine). Residues Ser376 and Ser433 each carry the phosphoserine modification.

The protein belongs to the KLHL3 family. As to quaternary structure, homodimer. Component of the BCR(KLHL3) E3 ubiquitin ligase complex, at least composed of CUL3 and KLHL3 and RBX1. Interacts with CLDN8. Post-translationally, phosphorylation at Ser-433 by PKA or PKC decreases the interaction with WNK1 and WNK4, leading to inhibit their degradation by the BCR(KLHL3) complex. Phosphorylated at Ser-433 by PKC in response to angiotensin II signaling, decreasing ability to promote degradation of WNK1 and WNK4, leading to activation of Na-Cl cotransporter SLC12A3/NCC. Phosphorylation at Ser-433 is increased by insulin. Dephosphorylated at Ser-433 by calcineurin PPP3CA, promoting degradation of WNK1 and WNK4.

Its subcellular location is the cytoplasm. The protein localises to the cytoskeleton. It is found in the cytosol. It participates in protein modification; protein ubiquitination. Its function is as follows. Substrate-specific adapter of a BCR (BTB-CUL3-RBX1) E3 ubiquitin ligase complex that acts as a regulator of ion transport in the distal nephron. The BCR(KLHL3) complex acts by mediating ubiquitination and degradation of WNK1 and WNK4, two activators of Na-Cl cotransporter SLC12A3/NCC in distal convoluted tubule cells of kidney, thereby regulating NaCl reabsorption. The BCR(KLHL3) complex also mediates ubiquitination and degradation of WNK3. The BCR(KLHL3) complex also mediates ubiquitination of CLDN8, a tight-junction protein required for paracellular chloride transport in the kidney, leading to its degradation. The sequence is that of Kelch-like protein 3 (KLHL3) from Bos taurus (Bovine).